The following is a 244-amino-acid chain: Flagellar brake protein YcgR (244 aa).

Residues 112 to 230 enclose the PilZ domain; it reads QRRRYFRISA…ERQLQRIIFS (119 aa).

This sequence belongs to the YcgR family. In terms of assembly, monomer. Interacts with MotA in the flagellar basal bodies. In another study it was not seen to interact with MotA, but instead with FliM and FliG, also in the flagellar basal body.

It localises to the bacterial flagellum basal body. Acts as a flagellar brake, regulating swimming and swarming in a bis-(3'-5') cyclic diguanylic acid (c-di-GMP)-dependent manner. When bound to c-di-GMP it binds to elements of the flagellar motor (MotA and/or FliG and FliM, binding to FliM also occurs in the absence of c-di-GMP), causing the motor to slow down. Thus, increasing levels of c-di-GMP lead to decreased motility. Probably binds 1 c-di-GMP dimer per subunit. This Escherichia coli (strain K12) protein is Flagellar brake protein YcgR (ycgR).